The chain runs to 176 residues: Deoxyuridine 5'-triphosphate nucleotidohydrolase (176 aa).

Substrate is bound by residues 67–69 (RSG), Asn-80, 84–86 (TVD), and Lys-94. A disordered region spans residues 141–176 (GGFGSTGGHASVDGAEGGITHGGNSYASVVSDREGQ).

This sequence belongs to the dUTPase family. It depends on Mg(2+) as a cofactor.

It catalyses the reaction dUTP + H2O = dUMP + diphosphate + H(+). The protein operates within pyrimidine metabolism; dUMP biosynthesis; dUMP from dCTP (dUTP route): step 2/2. In terms of biological role, this enzyme is involved in nucleotide metabolism: it produces dUMP, the immediate precursor of thymidine nucleotides and it decreases the intracellular concentration of dUTP so that uracil cannot be incorporated into DNA. This Streptomyces griseus subsp. griseus (strain JCM 4626 / CBS 651.72 / NBRC 13350 / KCC S-0626 / ISP 5235) protein is Deoxyuridine 5'-triphosphate nucleotidohydrolase.